We begin with the raw amino-acid sequence, 373 residues long: Molybdenum import ATP-binding protein ModC (373 aa).

Residues L4–D240 form the ABC transporter domain. G38 to S45 contributes to the ATP binding site. One can recognise a Mop domain in the interval A299–R369.

It belongs to the ABC transporter superfamily. Molybdate importer (TC 3.A.1.8) family. In terms of assembly, the complex is composed of two ATP-binding proteins (ModC), two transmembrane proteins (ModB) and a solute-binding protein (ModA).

The protein resides in the cell inner membrane. It carries out the reaction molybdate(out) + ATP + H2O = molybdate(in) + ADP + phosphate + H(+). Its function is as follows. Part of the ABC transporter complex ModABC involved in molybdenum import. Responsible for energy coupling to the transport system. The chain is Molybdenum import ATP-binding protein ModC from Rhodopseudomonas palustris (strain ATCC BAA-98 / CGA009).